Consider the following 1627-residue polypeptide: Adhesin P1 (1627 aa).

Positions 1–59 are cleaved as a signal peptide; sequence MHQTKKTALSKSTWILILTATASLATGLTVVGHFTSTTTTLKRQQFSYTRPDEVALRHT. Disordered regions lie at residues 219-238, 252-355, 898-953, and 1274-1362; these read LPQQ…AMFG, NEKL…PWRP, WRND…TTQD, and SFGT…TGND. Residues 224 to 234 are compositionally biased toward polar residues; the sequence is TESGQNTSTTG. Residues 261 to 276 show a composition bias toward low complexity; sequence TGSSTTSGSGQSTQRG. Residues 282–297 are compositionally biased toward basic and acidic residues; that stretch reads TKVKALKIEVKKKSDS. Polar residues-rich tracts occupy residues 903-933, 939-953, and 1274-1297; these read ASSG…SAGN, QDNI…TTQD, and SFGT…VFGT. Over residues 1307-1320 the composition is skewed to gly residues; that stretch reads SGGGAGGGSSGSGQ. The span at 1341–1352 shows a compositional bias: low complexity; the sequence is STSDGNTSSTNN. A cytadherence epitope region spans residues 1403–1415; that stretch reads GPQSVKFKSPDQI. A helical membrane pass occupies residues 1527–1547; the sequence is AITVPIVVIVLSVTLGLAIGI. Residues 1589 to 1627 are disordered; it reads QAPKRLKQTSAAKPGAPRPPVPPKPGAPKPPVQPPKKPA. Residues 1604 to 1627 are compositionally biased toward pro residues; it reads APRPPVPPKPGAPKPPVQPPKKPA.

The protein belongs to the adhesin P1 family.

The protein resides in the cell membrane. It localises to the cell projection. The protein localises to the attachment organelle. It is found in the cell surface. In terms of biological role, the protein is the major adhesin mediating the attachment of this mycoplasma to respiratory epithelium. This Mycoplasma pneumoniae (strain ATCC 29342 / M129 / Subtype 1) (Mycoplasmoides pneumoniae) protein is Adhesin P1 (mgpA).